Consider the following 330-residue polypeptide: Tetraacyldisaccharide 4'-kinase (330 aa).

58–65 provides a ligand contact to ATP; sequence TVGGSGKT.

This sequence belongs to the LpxK family.

The enzyme catalyses a lipid A disaccharide + ATP = a lipid IVA + ADP + H(+). It functions in the pathway glycolipid biosynthesis; lipid IV(A) biosynthesis; lipid IV(A) from (3R)-3-hydroxytetradecanoyl-[acyl-carrier-protein] and UDP-N-acetyl-alpha-D-glucosamine: step 6/6. Functionally, transfers the gamma-phosphate of ATP to the 4'-position of a tetraacyldisaccharide 1-phosphate intermediate (termed DS-1-P) to form tetraacyldisaccharide 1,4'-bis-phosphate (lipid IVA). This is Tetraacyldisaccharide 4'-kinase from Shewanella pealeana (strain ATCC 700345 / ANG-SQ1).